The sequence spans 109 residues: Cell division protein ZapA (109 aa).

The stretch at 21–99 forms a coiled coil; sequence PEQRDALNQA…IEQALLEQGR (79 aa).

Belongs to the ZapA family. Type 1 subfamily. Homodimer. Interacts with FtsZ.

The protein localises to the cytoplasm. Activator of cell division through the inhibition of FtsZ GTPase activity, therefore promoting FtsZ assembly into bundles of protofilaments necessary for the formation of the division Z ring. It is recruited early at mid-cell but it is not essential for cell division. The polypeptide is Cell division protein ZapA (Klebsiella pneumoniae subsp. pneumoniae (strain ATCC 700721 / MGH 78578)).